The chain runs to 265 residues: Phosphonates import ATP-binding protein PhnC 1 (265 aa).

One can recognise an ABC transporter domain in the interval 3 to 247 (LRLSAIELRH…HLDTLYANEQ (245 aa)). Residue 36–43 (GPSGAGKT) coordinates ATP.

The protein belongs to the ABC transporter superfamily. Phosphonates importer (TC 3.A.1.9.1) family. The complex is composed of two ATP-binding proteins (PhnC), two transmembrane proteins (PhnE) and a solute-binding protein (PhnD).

It localises to the cell inner membrane. It carries out the reaction phosphonate(out) + ATP + H2O = phosphonate(in) + ADP + phosphate + H(+). In terms of biological role, part of the ABC transporter complex PhnCDE involved in phosphonates import. Responsible for energy coupling to the transport system. This chain is Phosphonates import ATP-binding protein PhnC 1, found in Pseudomonas syringae pv. syringae (strain B728a).